The following is a 797-amino-acid chain: Protocadherin beta-11 (797 aa).

An N-terminal signal peptide occupies residues 1-26; the sequence is MENGGTRTQQIRQVLLLFVLLGMSQA. Residues 27–690 lie on the Extracellular side of the membrane; it reads GSETWSFSVA…AQTDFLTVYL (664 aa). Cadherin domains lie at 35–133, 138–242, 247–347, 352–451, and 456–561; these read VAEE…SPIF, MLLE…SPEF, YEVK…APEI, ITSP…APTF, and YTLF…SPFV. Asn418, Asn436, Asn487, and Asn567 each carry an N-linked (GlcNAc...) asparagine glycan. A Cadherin 6 domain is found at 568–671; it reads GSAPCTELVP…LVDGFSQPFL (104 aa). The helical transmembrane segment at 691–711 threads the bilayer; it reads VVALASVSSLFFFSVLLFVAV. The Cytoplasmic segment spans residues 712 to 797; the sequence is RLCRRSRAAS…TFQNSFGFNF (86 aa).

It is found in the cell membrane. In terms of biological role, potential calcium-dependent cell-adhesion protein. May be involved in the establishment and maintenance of specific neuronal connections in the brain. This Pan troglodytes (Chimpanzee) protein is Protocadherin beta-11 (PCDHB11).